The chain runs to 569 residues: Aspartic proteinase 3 (569 aa).

The N-terminal stretch at 1-21 (MKLKTVRSAVLSSLFASQVLG) is a signal peptide. The propeptide occupies 22–67 (KIIPAANKRDDDSNSKFVKLPFHKLYGDSLENVGSDKKPEVRLLKR). One can recognise a Peptidase A1 domain in the interval 83–475 (YSVDLEVGTP…DLENLEISMA (393 aa)). A glycan (N-linked (GlcNAc...) asparagine) is linked at Asn95. The active site involves Asp101. Asn203, Asn232, Asn242, Asn245, Asn299, and Asn358 each carry an N-linked (GlcNAc...) asparagine glycan. Asp371 is an active-site residue. N-linked (GlcNAc...) asparagine glycosylation is found at Asn480, Asn522, and Asn532. Asn548 carries GPI-anchor amidated asparagine lipidation. Residues 549-569 (VGDHIVPSLPLTLISLLFAFI) constitute a propeptide, removed in mature form.

This sequence belongs to the peptidase A1 family. As to quaternary structure, consists of an alpha and a beta subunit, which are maintained together by a disulfide bond. Post-translationally, the zymogen is transported to the periplasm, where the propeptide is removed and the enzyme is further subjected to an internal, autocatalytic cleavage to generate an alpha/beta two-subunit endopeptidase. The proteolytic processing at the cell surface is regulated by the environmental pH. In terms of processing, extensively N-glycosylated.

The protein resides in the cell membrane. The catalysed reaction is Hydrolyzes various precursor proteins with Arg or Lys in P1, and commonly Arg or Lys also in P2. The P3 amino acid is usually non-polar, but otherwise additional basic amino acids are favorable in both non-prime and prime positions.. In terms of biological role, cleaves proteins C-terminally to mono- and paired-basic residues. Involved in the shedding of a subset of GPI-anchored plasma membrane proteins from the cell surface, including itself, GAS1 and MSB2. May also play a role in the maturation of GPI-mannoproteins associated with the cell wall. Can process the alpha-mating factor precursor. Required for cell wall integrity. The chain is Aspartic proteinase 3 (YPS1) from Saccharomyces cerevisiae (strain ATCC 204508 / S288c) (Baker's yeast).